The following is a 437-amino-acid chain: Proline--tRNA ligase (437 aa).

It belongs to the class-II aminoacyl-tRNA synthetase family. ProS type 2 subfamily. Homodimer.

The protein localises to the cytoplasm. It carries out the reaction tRNA(Pro) + L-proline + ATP = L-prolyl-tRNA(Pro) + AMP + diphosphate. Functionally, catalyzes the attachment of proline to tRNA(Pro) in a two-step reaction: proline is first activated by ATP to form Pro-AMP and then transferred to the acceptor end of tRNA(Pro). This is Proline--tRNA ligase from Acidiphilium cryptum (strain JF-5).